Here is a 34-residue protein sequence, read N- to C-terminus: Photosystem I reaction center subunit XII (34 aa).

Residues 11-31 (VAIAFVVALIAGIAALLLSTA) traverse the membrane as a helical segment.

Belongs to the PsaM family. The G.violaceus PSI reaction center is composed of one copy each of PsaA,B,C,D,E,F,L,M and Z, and forms trimeric complexes.

It localises to the cell inner membrane. This chain is Photosystem I reaction center subunit XII, found in Gloeobacter violaceus (strain ATCC 29082 / PCC 7421).